We begin with the raw amino-acid sequence, 421 residues long: Imidazolonepropionase (421 aa).

Positions 81 and 83 each coordinate Fe(3+). Residues His-81 and His-83 each coordinate Zn(2+). 3 residues coordinate 4-imidazolone-5-propanoate: Arg-90, Tyr-153, and His-186. Residue Tyr-153 participates in N-formimidoyl-L-glutamate binding. His-251 is a binding site for Fe(3+). His-251 serves as a coordination point for Zn(2+). 4-imidazolone-5-propanoate is bound at residue Glu-254. Asp-326 serves as a coordination point for Fe(3+). Asp-326 serves as a coordination point for Zn(2+). N-formimidoyl-L-glutamate-binding residues include Asn-328 and Gly-330. Position 331 (Ser-331) interacts with 4-imidazolone-5-propanoate.

Belongs to the metallo-dependent hydrolases superfamily. HutI family. Zn(2+) is required as a cofactor. It depends on Fe(3+) as a cofactor.

Its subcellular location is the cytoplasm. It catalyses the reaction 4-imidazolone-5-propanoate + H2O = N-formimidoyl-L-glutamate. The protein operates within amino-acid degradation; L-histidine degradation into L-glutamate; N-formimidoyl-L-glutamate from L-histidine: step 3/3. Functionally, catalyzes the hydrolytic cleavage of the carbon-nitrogen bond in imidazolone-5-propanoate to yield N-formimidoyl-L-glutamate. It is the third step in the universal histidine degradation pathway. The chain is Imidazolonepropionase from Streptococcus pyogenes serotype M3 (strain SSI-1).